Reading from the N-terminus, the 253-residue chain is MFTVIIPGRYASTRLPGKPLADIHGKPMIVRVMEQAKRSGAKRVIVATDNLDVVRAVEQAGGEACMTREDHHSGTERLAEVIEKYQFADDEIIVNVQGDEPLIPPAIITQVAENLANCGAGMATLAVPIVDSKEAFNPNAVKVVMDAKGFALYFSRATIPWERDRFNLSHDEIGEHYLRHIGIYAYRAGFIRRYITWEPSPLESIEMLEQLRVLWYGEKIHVAKALEVPGVGVDTQDDLIAARAAFRALNQEF.

This sequence belongs to the KdsB family.

It is found in the cytoplasm. It carries out the reaction 3-deoxy-alpha-D-manno-oct-2-ulosonate + CTP = CMP-3-deoxy-beta-D-manno-octulosonate + diphosphate. Its pathway is nucleotide-sugar biosynthesis; CMP-3-deoxy-D-manno-octulosonate biosynthesis; CMP-3-deoxy-D-manno-octulosonate from 3-deoxy-D-manno-octulosonate and CTP: step 1/1. It participates in bacterial outer membrane biogenesis; lipopolysaccharide biosynthesis. In terms of biological role, activates KDO (a required 8-carbon sugar) for incorporation into bacterial lipopolysaccharide in Gram-negative bacteria. The polypeptide is 3-deoxy-manno-octulosonate cytidylyltransferase (Proteus mirabilis (strain HI4320)).